The chain runs to 306 residues: Curved DNA-binding protein (306 aa).

Residues 5 to 69 enclose the J domain; it reads DYYAIMGVKP…QRRAEYDQMW (65 aa).

It is found in the cytoplasm. Its subcellular location is the nucleoid. In terms of biological role, DNA-binding protein that preferentially recognizes a curved DNA sequence. It is probably a functional analog of DnaJ; displays overlapping activities with DnaJ, but functions under different conditions, probably acting as a molecular chaperone in an adaptive response to environmental stresses other than heat shock. Lacks autonomous chaperone activity; binds native substrates and targets them for recognition by DnaK. Its activity is inhibited by the binding of CbpM. The polypeptide is Curved DNA-binding protein (Escherichia coli O157:H7).